The following is a 459-amino-acid chain: 5-hydroxytryptamine receptor 2C (459 aa).

Positions 1–32 (MVNLGTAVRSLLVHLIGLLVWQFDISISPVAA) are cleaved as a signal peptide. The Extracellular portion of the chain corresponds to 33–56 (IVTDTFNSSDGGRLFQFPDGVQNW). The helical transmembrane segment at 57-81 (PALSIVVIIIMTIGGNILVIMAVSM) threads the bilayer. The Cytoplasmic portion of the chain corresponds to 82-87 (EKKLHN). Residues 88–112 (ATNYFLMSLAIADMLVGLLVMPLSL) form a helical membrane-spanning segment. Topologically, residues 113-129 (LAILYDYVWPLPRYLCP) are extracellular. Cys-128 and Cys-208 form a disulfide bridge. The helical transmembrane segment at 130–152 (VWISLDVLFSTASIMHLCAISLD) threads the bilayer. An ergotamine-binding site is contributed by Thr-140. The DRY motif; important for ligand-induced conformation changes motif lies at 152–154 (DRY). The Cytoplasmic portion of the chain corresponds to 153–168 (RYVAIRNPIEHSRFNS). The helical transmembrane segment at 169 to 190 (RTKAIMKIAIVWAISIGVSVPI) threads the bilayer. Residues 191–214 (PVIGLRDESKVFVNNTTCVLNDPN) lie on the Extracellular side of the membrane. Asn-204 and Asn-205 each carry an N-linked (GlcNAc...) asparagine glycan. Ergotamine is bound at residue Leu-210. Residues 215 to 237 (FVLIGSFVAFFIPLTIMVITYFL) traverse the membrane as a helical segment. Topologically, residues 238-312 (TIYVLRRQTL…AINNEKKASK (75 aa)) are cytoplasmic. The disordered stretch occupies residues 274-302 (DEEENAPNPNPDQKPRRKKKEKRPRGTMQ). Over residues 288 to 298 (PRRKKKEKRPR) the composition is skewed to basic residues. Residues 313-337 (VLGIVFFVFLIMWCPFFITNILSVL) traverse the membrane as a helical segment. A disulfide bridge links Cys-338 with Cys-342. The Extracellular portion of the chain corresponds to 338–348 (CGKACNQKLME). Residues 349 to 371 (KLLNVFVWIGYVCSGINPLVYTL) form a helical membrane-spanning segment. The NPxxY motif; important for ligand-induced conformation changes and signaling signature appears at 365-369 (NPLVY). Topologically, residues 372–459 (FNKIYRRAFS…NVVSERISSV (88 aa)) are cytoplasmic. The PDZ-binding motif lies at 457–459 (SSV).

The protein belongs to the G-protein coupled receptor 1 family. In terms of assembly, interacts with MPDZ. Interacts with ARRB2. Interacts with MPP3; this interaction stabilizes the receptor at the plasma membrane and prevents the desensitization of the HTR2C receptor-mediated calcium response. As to expression, detected in brain cortex, hypothalamus, brainstem and arcuate nucleus. Detected in the paraventricular nucleus of the hypothalamus.

The protein localises to the cell membrane. Functionally, G-protein coupled receptor for 5-hydroxytryptamine (serotonin). Also functions as a receptor for various drugs and psychoactive substances, including ergot alkaloid derivatives, 1-2,5,-dimethoxy-4-iodophenyl-2-aminopropane (DOI) and lysergic acid diethylamide (LSD). Ligand binding causes a conformation change that triggers signaling via guanine nucleotide-binding proteins (G proteins) and modulates the activity of downstream effectors. HTR2C is coupled to G(q)/G(11) G alpha proteins and activates phospholipase C-beta, releasing diacylglycerol (DAG) and inositol 1,4,5-trisphosphate (IP3) second messengers that modulate the activity of phosphatidylinositol 3-kinase and promote the release of Ca(2+) ions from intracellular stores, respectively. Beta-arrestin family members inhibit signaling via G proteins and mediate activation of alternative signaling pathways. Regulates neuronal activity via the activation of short transient receptor potential calcium channels in the brain, and thereby modulates the activation of pro-opiomelanocortin neurons and the release of CRH that then regulates the release of corticosterone. Plays a role in the regulation of appetite and eating behavior, responses to anxiogenic stimuli and stress. Plays a role in insulin sensitivity and glucose homeostasis. In Mus musculus (Mouse), this protein is 5-hydroxytryptamine receptor 2C.